The sequence spans 1742 residues: Meiosis regulator and mRNA stability factor 1 (1742 aa).

S65 is modified (phosphoserine). One can recognise an NYN domain in the interval 351 to 488 (IGVFWDIENC…ALLHHANELI (138 aa)). Disordered regions lie at residues 620 to 642 (PSSAKAAPGKGSQANSGSATRNA) and 655 to 721 (SKTG…KEKE). Over residues 631-642 (SQANSGSATRNA) the composition is skewed to polar residues. Positions 673 to 689 (APPHRSSSAAAPAPKAP) are enriched in low complexity. Y696 is modified (phosphotyrosine). Position 757 is a phosphoserine (S757). Residues 788–867 (VDVQISNLDY…KKILVSLATG (80 aa)) enclose the RRM domain. HTH OST-type domains follow at residues 872–946 (SLSL…SPLG) and 1000–1077 (SLKT…HNKP). A phosphoserine mark is found at S1089 and S1091. 6 HTH OST-type domains span residues 1097 to 1171 (QLIQ…LTHR), 1173 to 1247 (QVKR…CIPR), 1257 to 1332 (RTKQ…TEVE), 1333 to 1408 (RFKA…INRK), 1409 to 1484 (SLRA…CVKL), and 1486 to 1560 (SLYL…LKND). S1571 bears the Phosphoserine mark. The interval 1678-1729 (IRNENLPPDPSSPGVSAAVPAPPSPSSETPESLLSKDPTESPAKKQPKNRVK) is disordered. A compositionally biased stretch (low complexity) spans 1703–1712 (SSETPESLLS).

Interacts with LIMK2.

The protein resides in the peroxisome. In terms of biological role, essential regulator of oogenesis required for female meiotic progression to repress transposable elements and preventing their mobilization, which is essential for the germline integrity. Probably acts via some RNA metabolic process, equivalent to the piRNA system in males, which mediates the repression of transposable elements during meiosis by forming complexes composed of RNAs and governs the methylation and subsequent repression of transposons. Also required to protect from DNA double-strand breaks. This is Meiosis regulator and mRNA stability factor 1 from Bos taurus (Bovine).